A 132-amino-acid chain; its full sequence is Small ribosomal subunit protein uS8c (132 aa).

This sequence belongs to the universal ribosomal protein uS8 family. As to quaternary structure, part of the 30S ribosomal subunit.

It localises to the plastid. It is found in the chloroplast. In terms of biological role, one of the primary rRNA binding proteins, it binds directly to 16S rRNA central domain where it helps coordinate assembly of the platform of the 30S subunit. The sequence is that of Small ribosomal subunit protein uS8c (rps8) from Calycanthus floridus var. glaucus (Eastern sweetshrub).